Reading from the N-terminus, the 275-residue chain is Diaminopimelate epimerase (275 aa).

Residues Asn13, Gln46, and Asn65 each contribute to the substrate site. Cys74 functions as the Proton donor in the catalytic mechanism. Residues 75–76 (GN), Asn158, Asn191, and 209–210 (ER) each bind substrate. Residue Cys218 is the Proton acceptor of the active site. 219 to 220 (GT) is a substrate binding site.

The protein belongs to the diaminopimelate epimerase family. Homodimer.

Its subcellular location is the cytoplasm. The enzyme catalyses (2S,6S)-2,6-diaminopimelate = meso-2,6-diaminopimelate. It functions in the pathway amino-acid biosynthesis; L-lysine biosynthesis via DAP pathway; DL-2,6-diaminopimelate from LL-2,6-diaminopimelate: step 1/1. Catalyzes the stereoinversion of LL-2,6-diaminopimelate (L,L-DAP) to meso-diaminopimelate (meso-DAP), a precursor of L-lysine and an essential component of the bacterial peptidoglycan. The polypeptide is Diaminopimelate epimerase (Nitrosomonas europaea (strain ATCC 19718 / CIP 103999 / KCTC 2705 / NBRC 14298)).